The chain runs to 230 residues: NAD(P)H-hydrate epimerase (230 aa).

A YjeF N-terminal domain is found at 11–223 (YAAADIRAAE…DVGLDLSGAT (213 aa)). 59–63 (NNGGD) contributes to the (6S)-NADPHX binding site. The K(+) site is built by Asn-60 and Asp-125. (6S)-NADPHX is bound by residues 129 to 137 (GIGTTDSPA) and Asp-165. Position 168 (Ser-168) interacts with K(+).

This sequence belongs to the NnrE/AIBP family. It depends on K(+) as a cofactor.

It catalyses the reaction (6R)-NADHX = (6S)-NADHX. The catalysed reaction is (6R)-NADPHX = (6S)-NADPHX. Its function is as follows. Catalyzes the epimerization of the S- and R-forms of NAD(P)HX, a damaged form of NAD(P)H that is a result of enzymatic or heat-dependent hydration. This is a prerequisite for the S-specific NAD(P)H-hydrate dehydratase to allow the repair of both epimers of NAD(P)HX. The protein is NAD(P)H-hydrate epimerase of Clavibacter michiganensis subsp. michiganensis (strain NCPPB 382).